A 453-amino-acid polypeptide reads, in one-letter code: Dibenzothiophene-sulfone monooxygenase (453 aa).

Aspartate 59, threonine 106, histidine 156, tyrosine 160, and serine 231 together coordinate FMN.

Belongs to the NtaA/SnaA/DszA monooxygenase family. In terms of assembly, homodimer.

The protein localises to the cytoplasm. It catalyses the reaction dibenzothiophene 5,5-dioxide + FMNH2 + NADH + O2 = 2'-hydroxybiphenyl-2-sulfinate + FMN + NAD(+) + H2O + H(+). It functions in the pathway sulfur metabolism; dibenzothiophene degradation. Its function is as follows. Catalyzes the second step of the '4S' desulfurization pathway that removes covalently bound sulfur from dibenzothiophene (DBT) without breaking carbon-carbon bonds. Metabolizes DBT-sulfone (DBTO2 or DBT 5,5-dioxide) to 2-(2'-hydroxyphenyl)benzene sulphinate (HBPS). This chain is Dibenzothiophene-sulfone monooxygenase, found in Rhodococcus erythropolis (strain XP).